The primary structure comprises 968 residues: Dynein axonemal intermediate chain 3 (968 aa).

Basic and acidic residues predominate over residues 1–33 (MKDTSSKRPKSKEANKKKTKDKSNADNLPKPEE). Disordered regions lie at residues 1–39 (MKDT…ASEP) and 136–166 (KPPA…PEPQ). The span at 141 to 157 (GADEQMEDEEQQEEEEE) shows a compositional bias: acidic residues. 3 WD repeats span residues 407 to 447 (ECPD…DRLQ), 480 to 536 (GHKA…VMVH), and 712 to 753 (VYSK…RQPS). The stretch at 830–857 (LHTHTDQLRVLEERVREAKQNLLAVSDR) forms a coiled coil. Over residues 897–919 (KRQSDHQKKKKETEAEQQKKKTE) the composition is skewed to basic and acidic residues. The interval 897-930 (KRQSDHQKKKKETEAEQQKKKTELVTPPKQEEEV) is disordered.

Part of the multisubunit axonemal dynein complex formed at least of two heavy chains and a number of intermediate and light chains.

Its subcellular location is the cytoplasm. Functionally, may be involved in the regulation of cilia function. The protein is Dynein axonemal intermediate chain 3 (dnai3) of Danio rerio (Zebrafish).